The following is a 606-amino-acid chain: Melanoma-associated antigen D2 (606 aa).

2 disordered regions span residues 1-29 and 52-204; these read MSDT…MMQT and SEDV…GGRR. Residue S2 is modified to N-acetylserine. At S5 the chain carries Phosphoserine. At T72 the chain carries Phosphothreonine. A compositionally biased stretch (polar residues) spans 79–100; it reads PATQASSTTQLTDTQVLATENK. Basic and acidic residues predominate over residues 122 to 131; it reads ETKKVSHVAD. Over residues 142 to 164 the composition is skewed to low complexity; that stretch reads EAAPSQASADEPEPESAAAQSQE. S157 carries the phosphoserine modification. Over residues 171–181 the composition is skewed to basic residues; sequence KVKAKKARKVK. Phosphoserine is present on residues S190, S191, S194, S197, S244, and S247. Residues 248–260 are compositionally biased toward basic residues; it reads PKARRGKARRRAA. Residues 248-275 form a disordered region; the sequence is PKARRGKARRRAAKLQSSQEPEAPPPRD. Phosphoserine occurs at positions 264 and 265. In terms of domain architecture, MAGE spans 279 to 478; it reads LQGRANDLVK…KEWAAQYREA (200 aa). The segment at 534–563 is disordered; the sequence is GAEAKAKAQESGSASTGASTSTNNSASASA.

As to quaternary structure, interacts with GNAS.

Regulates the expression, localization to the plasma membrane and function of the sodium chloride cotransporters SLC12A1 and SLC12A3, two key components of salt reabsorption in the distal renal tubule. In Pongo abelii (Sumatran orangutan), this protein is Melanoma-associated antigen D2 (MAGED2).